Reading from the N-terminus, the 506-residue chain is Lysine--tRNA ligase (506 aa).

Mg(2+) is bound by residues Glu416 and Glu423.

The protein belongs to the class-II aminoacyl-tRNA synthetase family. In terms of assembly, homodimer. Mg(2+) is required as a cofactor.

It is found in the cytoplasm. The catalysed reaction is tRNA(Lys) + L-lysine + ATP = L-lysyl-tRNA(Lys) + AMP + diphosphate. The sequence is that of Lysine--tRNA ligase from Pelotomaculum thermopropionicum (strain DSM 13744 / JCM 10971 / SI).